The sequence spans 645 residues: 1-deoxy-D-xylulose-5-phosphate synthase (645 aa).

Residues His83 and 124–126 contribute to the thiamine diphosphate site; that span reads GHS. Mg(2+) is bound at residue Asp155. Thiamine diphosphate is bound by residues 156 to 157, Asn184, Tyr295, and Glu376; that span reads GS. Asn184 lines the Mg(2+) pocket.

It belongs to the transketolase family. DXPS subfamily. In terms of assembly, homodimer. It depends on Mg(2+) as a cofactor. The cofactor is thiamine diphosphate.

The catalysed reaction is D-glyceraldehyde 3-phosphate + pyruvate + H(+) = 1-deoxy-D-xylulose 5-phosphate + CO2. It participates in metabolic intermediate biosynthesis; 1-deoxy-D-xylulose 5-phosphate biosynthesis; 1-deoxy-D-xylulose 5-phosphate from D-glyceraldehyde 3-phosphate and pyruvate: step 1/1. Functionally, catalyzes the acyloin condensation reaction between C atoms 2 and 3 of pyruvate and glyceraldehyde 3-phosphate to yield 1-deoxy-D-xylulose-5-phosphate (DXP). The polypeptide is 1-deoxy-D-xylulose-5-phosphate synthase (Desulfotalea psychrophila (strain LSv54 / DSM 12343)).